We begin with the raw amino-acid sequence, 131 residues long: Translation initiation factor 5A (131 aa).

Position 36 is a hypusine (K36).

It belongs to the eIF-5A family.

It localises to the cytoplasm. Functionally, functions by promoting the formation of the first peptide bond. The chain is Translation initiation factor 5A (eIF5A) from Metallosphaera sedula (strain ATCC 51363 / DSM 5348 / JCM 9185 / NBRC 15509 / TH2).